A 113-amino-acid polypeptide reads, in one-letter code: Large ribosomal subunit protein bL17 (113 aa).

The protein belongs to the bacterial ribosomal protein bL17 family. Part of the 50S ribosomal subunit. Contacts protein L32.

The protein is Large ribosomal subunit protein bL17 of Clostridium kluyveri (strain NBRC 12016).